Reading from the N-terminus, the 273-residue chain is NAD(P)H-hydrate epimerase (273 aa).

The region spanning 52 to 260 (AQQIDQELFN…GIIQKYELNL (209 aa)) is the YjeF N-terminal domain. Residue 105–109 (NNGGD) participates in (6S)-NADPHX binding. Residues Asn-106 and Asp-170 each coordinate K(+). (6S)-NADPHX-binding positions include 174–180 (GFSFKGE) and Asp-203. Ser-206 lines the K(+) pocket.

This sequence belongs to the NnrE/AIBP family. The cofactor is K(+).

The enzyme catalyses (6R)-NADHX = (6S)-NADHX. It catalyses the reaction (6R)-NADPHX = (6S)-NADPHX. In terms of biological role, catalyzes the epimerization of the S- and R-forms of NAD(P)HX, a damaged form of NAD(P)H that is a result of enzymatic or heat-dependent hydration. This is a prerequisite for the S-specific NAD(P)H-hydrate dehydratase to allow the repair of both epimers of NAD(P)HX. This chain is NAD(P)H-hydrate epimerase, found in Branchiostoma floridae (Florida lancelet).